We begin with the raw amino-acid sequence, 384 residues long: Acetylornithine aminotransferase (384 aa).

Pyridoxal 5'-phosphate is bound by residues 95 to 96 (GA) and phenylalanine 122. Arginine 125 provides a ligand contact to N(2)-acetyl-L-ornithine. A pyridoxal 5'-phosphate-binding site is contributed by 207 to 210 (DEIQ). Lysine 236 bears the N6-(pyridoxal phosphate)lysine mark. Serine 264 contacts N(2)-acetyl-L-ornithine. Threonine 265 contacts pyridoxal 5'-phosphate.

It belongs to the class-III pyridoxal-phosphate-dependent aminotransferase family. ArgD subfamily. Homodimer. Requires pyridoxal 5'-phosphate as cofactor.

It is found in the cytoplasm. It catalyses the reaction N(2)-acetyl-L-ornithine + 2-oxoglutarate = N-acetyl-L-glutamate 5-semialdehyde + L-glutamate. It functions in the pathway amino-acid biosynthesis; L-arginine biosynthesis; N(2)-acetyl-L-ornithine from L-glutamate: step 4/4. This Halalkalibacterium halodurans (strain ATCC BAA-125 / DSM 18197 / FERM 7344 / JCM 9153 / C-125) (Bacillus halodurans) protein is Acetylornithine aminotransferase.